Reading from the N-terminus, the 383-residue chain is Chaperone protein DnaJ (383 aa).

Residues 5 to 70 (DYYELLGVSR…QKRAAYDRFG (66 aa)) enclose the J domain. A CR-type zinc finger spans residues 140–219 (GTKTEIRVPT…CSGAGTVPRE (80 aa)). Zn(2+) is bound by residues C153, C156, C171, C174, C193, C196, C207, and C210. CXXCXGXG motif repeat units lie at residues 153 to 160 (CDACSGTG), 171 to 178 (CPTCGGAG), 193 to 200 (CPTCGGAG), and 207 to 214 (CRVCSGAG).

It belongs to the DnaJ family. As to quaternary structure, homodimer. Zn(2+) serves as cofactor.

The protein localises to the cytoplasm. Its function is as follows. Participates actively in the response to hyperosmotic and heat shock by preventing the aggregation of stress-denatured proteins and by disaggregating proteins, also in an autonomous, DnaK-independent fashion. Unfolded proteins bind initially to DnaJ; upon interaction with the DnaJ-bound protein, DnaK hydrolyzes its bound ATP, resulting in the formation of a stable complex. GrpE releases ADP from DnaK; ATP binding to DnaK triggers the release of the substrate protein, thus completing the reaction cycle. Several rounds of ATP-dependent interactions between DnaJ, DnaK and GrpE are required for fully efficient folding. Also involved, together with DnaK and GrpE, in the DNA replication of plasmids through activation of initiation proteins. This is Chaperone protein DnaJ from Acidiphilium cryptum (strain JF-5).